We begin with the raw amino-acid sequence, 90 residues long: MSQISQTALASLDESSRKDIMQFIESENSKSKVQMSIHNFTDMCFKKCNANKPITSGTLDSSEEQCLTNCLNRFLDTNIKVVQALQGAQK.

Residues 44–70 (CFKKCNANKPITSGTLDSSEEQCLTNC) carry the Twin CX3C motif motif. 2 cysteine pairs are disulfide-bonded: C44–C70 and C48–C66.

It belongs to the small Tim family. In terms of assembly, heterohexamer; composed of 3 copies of TIM8 and 3 copies of TIM13, named soluble 70 kDa complex. Associates with the TIM22 complex, whose core is composed of TIM22 and TIM54. Interacts with the transmembrane regions of multi-pass transmembrane proteins in transit.

The protein resides in the mitochondrion inner membrane. In terms of biological role, mitochondrial intermembrane chaperone that participates in the import and insertion of some multi-pass transmembrane proteins into the mitochondrial inner membrane. Also required for the transfer of beta-barrel precursors from the TOM complex to the sorting and assembly machinery (SAM complex) of the outer membrane. Acts as a chaperone-like protein that protects the hydrophobic precursors from aggregation and guide them through the mitochondrial intermembrane space. The TIM8-TIM13 complex is non essential and only mediates the import of few proteins, while the predominant TIM9-TIM10 70 kDa complex is crucial and mediates the import of much more proteins. The protein is Mitochondrial import inner membrane translocase subunit TIM8 (TIM8) of Debaryomyces hansenii (strain ATCC 36239 / CBS 767 / BCRC 21394 / JCM 1990 / NBRC 0083 / IGC 2968) (Yeast).